A 470-amino-acid chain; its full sequence is ATP synthase subunit beta (470 aa).

Gly-155–Thr-162 is a binding site for ATP.

The protein belongs to the ATPase alpha/beta chains family. F-type ATPases have 2 components, CF(1) - the catalytic core - and CF(0) - the membrane proton channel. CF(1) has five subunits: alpha(3), beta(3), gamma(1), delta(1), epsilon(1). CF(0) has three main subunits: a(1), b(2) and c(9-12). The alpha and beta chains form an alternating ring which encloses part of the gamma chain. CF(1) is attached to CF(0) by a central stalk formed by the gamma and epsilon chains, while a peripheral stalk is formed by the delta and b chains.

It is found in the cell membrane. The enzyme catalyses ATP + H2O + 4 H(+)(in) = ADP + phosphate + 5 H(+)(out). Produces ATP from ADP in the presence of a proton gradient across the membrane. The catalytic sites are hosted primarily by the beta subunits. In Staphylococcus epidermidis (strain ATCC 35984 / DSM 28319 / BCRC 17069 / CCUG 31568 / BM 3577 / RP62A), this protein is ATP synthase subunit beta.